Here is a 41-residue protein sequence, read N- to C-terminus: uncharacterized protein (41 aa).

Residues 1-23 (MNFLMRAIFSLLLLFTLSIPVIS) form the signal peptide.

This is an uncharacterized protein from Escherichia coli (strain K12).